The chain runs to 42 residues: Purine nucleoside phosphorylase DeoD-type (42 aa).

An a purine D-ribonucleoside-binding site is contributed by 8–9; that stretch reads SD. D9 acts as the Proton donor in catalysis.

It belongs to the PNP/UDP phosphorylase family. As to quaternary structure, homohexamer; trimer of homodimers.

The catalysed reaction is a purine D-ribonucleoside + phosphate = a purine nucleobase + alpha-D-ribose 1-phosphate. It carries out the reaction a purine 2'-deoxy-D-ribonucleoside + phosphate = a purine nucleobase + 2-deoxy-alpha-D-ribose 1-phosphate. Functionally, catalyzes the reversible phosphorolytic breakdown of the N-glycosidic bond in the beta-(deoxy)ribonucleoside molecules, with the formation of the corresponding free purine bases and pentose-1-phosphate. In Mycoplasmoides pirum (Mycoplasma pirum), this protein is Purine nucleoside phosphorylase DeoD-type.